The following is a 455-amino-acid chain: Bifunctional protein GlmU (455 aa).

Positions 1 to 228 (MTQPLHVIIL…AQEAEGANDP (228 aa)) are pyrophosphorylase. UDP-N-acetyl-alpha-D-glucosamine is bound by residues 10-13 (LAAG), lysine 24, glutamine 76, 81-82 (GT), 103-105 (YGD), glycine 138, glutamate 153, asparagine 168, and asparagine 226. Aspartate 105 is a binding site for Mg(2+). Position 226 (asparagine 226) interacts with Mg(2+). The tract at residues 229–249 (WQLSQLERAWQRRAVRALCAQ) is linker. Positions 250 to 455 (GARVRDPARL…DGWKRPLKKS (206 aa)) are N-acetyltransferase. Residues arginine 332 and lysine 350 each coordinate UDP-N-acetyl-alpha-D-glucosamine. Histidine 362 functions as the Proton acceptor in the catalytic mechanism. Positions 365 and 376 each coordinate UDP-N-acetyl-alpha-D-glucosamine. Acetyl-CoA is bound by residues alanine 379, 385–386 (NY), serine 404, alanine 422, and arginine 439.

The protein in the N-terminal section; belongs to the N-acetylglucosamine-1-phosphate uridyltransferase family. It in the C-terminal section; belongs to the transferase hexapeptide repeat family. In terms of assembly, homotrimer. Requires Mg(2+) as cofactor.

The protein resides in the cytoplasm. It catalyses the reaction alpha-D-glucosamine 1-phosphate + acetyl-CoA = N-acetyl-alpha-D-glucosamine 1-phosphate + CoA + H(+). It carries out the reaction N-acetyl-alpha-D-glucosamine 1-phosphate + UTP + H(+) = UDP-N-acetyl-alpha-D-glucosamine + diphosphate. Its pathway is nucleotide-sugar biosynthesis; UDP-N-acetyl-alpha-D-glucosamine biosynthesis; N-acetyl-alpha-D-glucosamine 1-phosphate from alpha-D-glucosamine 6-phosphate (route II): step 2/2. It functions in the pathway nucleotide-sugar biosynthesis; UDP-N-acetyl-alpha-D-glucosamine biosynthesis; UDP-N-acetyl-alpha-D-glucosamine from N-acetyl-alpha-D-glucosamine 1-phosphate: step 1/1. The protein operates within bacterial outer membrane biogenesis; LPS lipid A biosynthesis. Catalyzes the last two sequential reactions in the de novo biosynthetic pathway for UDP-N-acetylglucosamine (UDP-GlcNAc). The C-terminal domain catalyzes the transfer of acetyl group from acetyl coenzyme A to glucosamine-1-phosphate (GlcN-1-P) to produce N-acetylglucosamine-1-phosphate (GlcNAc-1-P), which is converted into UDP-GlcNAc by the transfer of uridine 5-monophosphate (from uridine 5-triphosphate), a reaction catalyzed by the N-terminal domain. This is Bifunctional protein GlmU from Stenotrophomonas maltophilia (strain K279a).